Here is a 213-residue protein sequence, read N- to C-terminus: ATP phosphoribosyltransferase (213 aa).

The protein belongs to the ATP phosphoribosyltransferase family. Short subfamily. In terms of assembly, heteromultimer composed of HisG and HisZ subunits.

The protein resides in the cytoplasm. It carries out the reaction 1-(5-phospho-beta-D-ribosyl)-ATP + diphosphate = 5-phospho-alpha-D-ribose 1-diphosphate + ATP. It participates in amino-acid biosynthesis; L-histidine biosynthesis; L-histidine from 5-phospho-alpha-D-ribose 1-diphosphate: step 1/9. In terms of biological role, catalyzes the condensation of ATP and 5-phosphoribose 1-diphosphate to form N'-(5'-phosphoribosyl)-ATP (PR-ATP). Has a crucial role in the pathway because the rate of histidine biosynthesis seems to be controlled primarily by regulation of HisG enzymatic activity. The chain is ATP phosphoribosyltransferase from Methylococcus capsulatus (strain ATCC 33009 / NCIMB 11132 / Bath).